The chain runs to 341 residues: DNA-directed RNA polymerase subunit alpha (341 aa).

Residues 1-233 are alpha N-terminal domain (alpha-NTD); it reads MLKDGTSVSN…DLLSPFLHTK (233 aa). An alpha C-terminal domain (alpha-CTD) region spans residues 262 to 341; that stretch reads SEGDFFKNTF…NEKPRVVGDE (80 aa).

Belongs to the RNA polymerase alpha chain family. As to quaternary structure, in plastids the minimal PEP RNA polymerase catalytic core is composed of four subunits: alpha, beta, beta', and beta''. When a (nuclear-encoded) sigma factor is associated with the core the holoenzyme is formed, which can initiate transcription.

Its subcellular location is the plastid. The protein resides in the chloroplast. It carries out the reaction RNA(n) + a ribonucleoside 5'-triphosphate = RNA(n+1) + diphosphate. Functionally, DNA-dependent RNA polymerase catalyzes the transcription of DNA into RNA using the four ribonucleoside triphosphates as substrates. In Marsilea quadrifolia (European water clover), this protein is DNA-directed RNA polymerase subunit alpha.